The chain runs to 172 residues: Large ribosomal subunit protein uL10 (172 aa).

This sequence belongs to the universal ribosomal protein uL10 family. As to quaternary structure, part of the ribosomal stalk of the 50S ribosomal subunit. The N-terminus interacts with L11 and the large rRNA to form the base of the stalk. The C-terminus forms an elongated spine to which L12 dimers bind in a sequential fashion forming a multimeric L10(L12)X complex.

Functionally, forms part of the ribosomal stalk, playing a central role in the interaction of the ribosome with GTP-bound translation factors. The sequence is that of Large ribosomal subunit protein uL10 from Rhizobium etli (strain ATCC 51251 / DSM 11541 / JCM 21823 / NBRC 15573 / CFN 42).